Reading from the N-terminus, the 115-residue chain is Dolichyl-diphosphooligosaccharide--protein glycosyltransferase subunit DAD1 (115 aa).

Over 1 to 31 (MGTSTAKEAHALIASLRSAYSATPTKLKIID) the chain is Cytoplasmic. Residues 32–52 (LYVVYAILTAVVQVVYMAIVG) traverse the membrane as a helical segment. Residues 53–55 (SFP) lie on the Lumenal side of the membrane. A helical membrane pass occupies residues 56–76 (FNAFLSGVLSCTGTAVLAVCL). At 77 to 94 (RMQVNKENREFKDLPPER) the chain is on the cytoplasmic side. The chain crosses the membrane as a helical span at residues 95–115 (AFADFVLCNLVLHLVIMNFLG).

It belongs to the DAD/OST2 family. In terms of assembly, component of the oligosaccharyltransferase (OST) complex.

It localises to the endoplasmic reticulum membrane. It participates in protein modification; protein glycosylation. Subunit of the oligosaccharyl transferase (OST) complex that catalyzes the initial transfer of a defined glycan (Glc(3)Man(9)GlcNAc(2) in eukaryotes) from the lipid carrier dolichol-pyrophosphate to an asparagine residue within an Asn-X-Ser/Thr consensus motif in nascent polypeptide chains, the first step in protein N-glycosylation. N-glycosylation occurs cotranslationally and the complex associates with the Sec61 complex at the channel-forming translocon complex that mediates protein translocation across the endoplasmic reticulum (ER). All subunits are required for a maximal enzyme activity. The sequence is that of Dolichyl-diphosphooligosaccharide--protein glycosyltransferase subunit DAD1 (DAD1) from Picea mariana (Black spruce).